A 141-amino-acid polypeptide reads, in one-letter code: Extracellular globin-1 (141 aa).

The 141-residue stretch at 1 to 141 (DCNTLKRFKV…YAVIAAGIKP (141 aa)) folds into the Globin domain. A disulfide bridge connects residues cysteine 2 and cysteine 131. Position 94 (histidine 94) interacts with heme b.

This sequence belongs to the globin family. As to quaternary structure, the giant hemoglobins of worms are formed of a monomeric subunit and a disulfide-bonded trimer. This subunit is monomeric.

The protein resides in the secreted. The sequence is that of Extracellular globin-1 from Metaphire sieboldi (Earthworm).